The following is a 585-amino-acid chain: Formate--tetrahydrofolate ligase (585 aa).

65–72 (TPHGEGKT) is a binding site for ATP.

This sequence belongs to the formate--tetrahydrofolate ligase family.

It catalyses the reaction (6S)-5,6,7,8-tetrahydrofolate + formate + ATP = (6R)-10-formyltetrahydrofolate + ADP + phosphate. Its pathway is one-carbon metabolism; tetrahydrofolate interconversion. In Shewanella baltica (strain OS195), this protein is Formate--tetrahydrofolate ligase.